We begin with the raw amino-acid sequence, 311 residues long: 4-hydroxy-tetrahydrodipicolinate synthase (311 aa).

Threonine 51 contacts pyruvate. Tyrosine 140 (proton donor/acceptor) is an active-site residue. The active-site Schiff-base intermediate with substrate is the lysine 168. Residue isoleucine 209 participates in pyruvate binding.

It belongs to the DapA family. Homotetramer; dimer of dimers.

It is found in the cytoplasm. It catalyses the reaction L-aspartate 4-semialdehyde + pyruvate = (2S,4S)-4-hydroxy-2,3,4,5-tetrahydrodipicolinate + H2O + H(+). It functions in the pathway amino-acid biosynthesis; L-lysine biosynthesis via DAP pathway; (S)-tetrahydrodipicolinate from L-aspartate: step 3/4. Catalyzes the condensation of (S)-aspartate-beta-semialdehyde [(S)-ASA] and pyruvate to 4-hydroxy-tetrahydrodipicolinate (HTPA). In Streptococcus gordonii (strain Challis / ATCC 35105 / BCRC 15272 / CH1 / DL1 / V288), this protein is 4-hydroxy-tetrahydrodipicolinate synthase.